A 431-amino-acid chain; its full sequence is Enolase (431 aa).

Glutamine 163 provides a ligand contact to (2R)-2-phosphoglycerate. Glutamate 205 functions as the Proton donor in the catalytic mechanism. Aspartate 242, glutamate 283, and aspartate 310 together coordinate Mg(2+). (2R)-2-phosphoglycerate contacts are provided by lysine 335, arginine 364, serine 365, and lysine 386. Catalysis depends on lysine 335, which acts as the Proton acceptor.

This sequence belongs to the enolase family. Mg(2+) is required as a cofactor.

It localises to the cytoplasm. It is found in the secreted. Its subcellular location is the cell surface. It catalyses the reaction (2R)-2-phosphoglycerate = phosphoenolpyruvate + H2O. It functions in the pathway carbohydrate degradation; glycolysis; pyruvate from D-glyceraldehyde 3-phosphate: step 4/5. Its function is as follows. Catalyzes the reversible conversion of 2-phosphoglycerate (2-PG) into phosphoenolpyruvate (PEP). It is essential for the degradation of carbohydrates via glycolysis. The protein is Enolase of Kineococcus radiotolerans (strain ATCC BAA-149 / DSM 14245 / SRS30216).